The chain runs to 147 residues: MKGQRNIGMVAHDERKEDLLDWVQHNLQALIPHRIFATGTTGGLLRQRFGDLTITPMKSGPLGGDQQLGSMIAEGRLDMLFFLIDPMAPHPHDVDIKALLRLAVLYNIPAAYNRSTADFLITSPFMTGEYIPEIKDYTPYVKRLGAK.

One can recognise an MGS-like domain in the interval 1–147 (MKGQRNIGMV…TPYVKRLGAK (147 aa)). Substrate-binding positions include H12, K16, 38-41 (TGTT), and 59-60 (SG). D65 serves as the catalytic Proton donor/acceptor. Residue H92 participates in substrate binding.

The protein belongs to the methylglyoxal synthase family.

The enzyme catalyses dihydroxyacetone phosphate = methylglyoxal + phosphate. Functionally, catalyzes the formation of methylglyoxal from dihydroxyacetone phosphate. This Oleidesulfovibrio alaskensis (strain ATCC BAA-1058 / DSM 17464 / G20) (Desulfovibrio alaskensis) protein is Methylglyoxal synthase.